The sequence spans 403 residues: MATATSASLFSTVSSSYSKASSIPHSRLQSVKFNSVPSFTGLKSTSLISGSDSSSLAKTLRGSVTKAQTSDKKPYGFKINASYKVAVLGAAGGIGQPLSLLIKMSPLVSTLHLYDIANVKGVAADLSHCNTPSQVRDFTGPSELADCLKDVNVVVIPAGVPRKPGMTRDDLFNINANIVKTLVEAVAENCPNAFIHIISNPVNSTVPIAAEVLKKKGVYDPKKLFGVTTLDVVRANTFVSQKKNLKLIDVDVPVIGGHAGITILPLLSKTKPSVNFTDEEIQELTVRIQNAGTEVVDAKAGAGSATLSMAYAAARFVESSLRALDGDGDVYECSFVESTLTDLPFFASRVKIGKNGLEAVIESDLQGLTEYEQKALEALKVELKASIDKGVAFANKPAAAAAN.

A chloroplast-targeting transit peptide spans 1-80; that stretch reads MATATSASLF…DKKPYGFKIN (80 aa). NAD(+) contacts are provided by residues 89-95 and Asp115; that span reads GAAGGIG. Arg162 and Arg168 together coordinate substrate. Residues Asn175 and 198-200 contribute to the NAD(+) site; that span reads ISN. Residues Asn200 and Arg234 each coordinate substrate. His258 (proton acceptor) is an active-site residue. Residue Met309 participates in NAD(+) binding.

The protein belongs to the LDH/MDH superfamily. MDH type 1 family. Homodimer. In terms of tissue distribution, expressed in rosette leaves. Expressed in meristematic regions of roots and shoots, cotyledons, young leaves, trichomes, stamen, pollen, tapetum, gynoecium and ovules.

The protein localises to the plastid. It is found in the chloroplast stroma. The catalysed reaction is (S)-malate + NAD(+) = oxaloacetate + NADH + H(+). Functionally, catalyzes a reversible NAD-dependent dehydrogenase reaction involved in central metabolism and redox homeostasis between organelle compartments. Plays a key role in the metabolism of dark chloroplasts and non-green plastids. Essential for embryo viability. Plays an essential role in heterotrophic metabolism in embryos, and autotrophic metabolism in photosynthetic tissues as well. The sequence is that of Malate dehydrogenase, chloroplastic from Arabidopsis thaliana (Mouse-ear cress).